A 142-amino-acid chain; its full sequence is 3-hydroxyacyl-[acyl-carrier-protein] dehydratase FabZ (142 aa).

Histidine 46 is an active-site residue.

This sequence belongs to the thioester dehydratase family. FabZ subfamily.

It is found in the cytoplasm. It catalyses the reaction a (3R)-hydroxyacyl-[ACP] = a (2E)-enoyl-[ACP] + H2O. Involved in unsaturated fatty acids biosynthesis. Catalyzes the dehydration of short chain beta-hydroxyacyl-ACPs and long chain saturated and unsaturated beta-hydroxyacyl-ACPs. This chain is 3-hydroxyacyl-[acyl-carrier-protein] dehydratase FabZ, found in Thermus thermophilus (strain ATCC BAA-163 / DSM 7039 / HB27).